The primary structure comprises 1007 residues: Serine/threonine-protein kinase PRP4 homolog (1007 aa).

Residues 1-104 (MAATEPPSLR…PAKRTKLDDL (104 aa)) form a disordered region. Position 2 is an N-acetylalanine (Ala2). Phosphoserine is present on residues Ser8, Ser21, Ser24, and Ser33. Composition is skewed to basic residues over residues 40 to 60 (KHSRHKKKKHKHRSKHKKHKH) and 68 to 82 (KKHKHKHKHKKHKRK). A compositionally biased stretch (basic and acidic residues) spans 83–92 (EVLDASDKEG). 2 positions are modified to phosphoserine: Ser88 and Ser94. Lys100 carries the post-translational modification N6-acetyllysine; alternate. Lys100 participates in a covalent cross-link: Glycyl lysine isopeptide (Lys-Gly) (interchain with G-Cter in SUMO2); alternate. Residue Lys112 forms a Glycyl lysine isopeptide (Lys-Gly) (interchain with G-Cter in SUMO2) linkage. Lys118 participates in a covalent cross-link: Glycyl lysine isopeptide (Lys-Gly) (interchain with G-Cter in SUMO2); alternate. Residue Lys118 forms a Glycyl lysine isopeptide (Lys-Gly) (interchain with G-Cter in SUMO1); alternate linkage. Ser132 carries the phosphoserine modification. Tyr141 carries the post-translational modification Phosphotyrosine. Disordered regions lie at residues 141–535 (YESG…EDEE) and 560–583 (NISVPSEPSSPQSSTRSRSPSPDD). Phosphoserine is present on residues Ser143, Ser145, and Ser167. Residues 158-169 (GNRSSTRSSSTR) are compositionally biased toward low complexity. Glycyl lysine isopeptide (Lys-Gly) (interchain with G-Cter in SUMO2) cross-links involve residues Lys171 and Lys178. 2 stretches are compositionally biased toward basic residues: residues 180–203 (SAKKRSKSRSKERTRHRSDKRKSK) and 215–231 (RSKSKERRKSKSPSKRS). Ser240, Ser242, Ser258, Ser278, Ser292, and Ser294 each carry phosphoserine. The span at 248–271 (RSQEKVGKARSPADEKIKSEEKGK) shows a compositional bias: basic and acidic residues. Positions 294 to 303 (SPVDLRDKSK) are enriched in basic and acidic residues. Residues 304–315 (DRRSRSKERKSK) are compositionally biased toward basic residues. Residues 316–325 (RSEIDKEKKP) are compositionally biased toward basic and acidic residues. Phosphoserine occurs at positions 328, 354, 356, 366, and 368. Residues 342–367 (PSRRPGRSPKRRSLSPKQRDKSRRSR) show a composition bias toward basic residues. Thr385 carries the post-translational modification Phosphothreonine. Ser387 bears the Phosphoserine mark. Composition is skewed to basic and acidic residues over residues 395 to 408 (RSLERKRREPERRR) and 415 to 429 (RPRDDILGRCERSKD). 3 positions are modified to phosphoserine: Ser427, Ser431, and Ser437. The span at 438 to 497 (PSRRRSRSPIRRRSRSPLRRSRSPRRRSRSPRRRDRSRRSRSRLRRRSRSRGGHRRRSRS) shows a compositional bias: basic residues. A phosphoserine mark is found at Ser518, Ser519, Ser520, Ser565, Ser569, Ser576, Ser578, and Ser580. Residues 518–535 (SSSDDNLEDFDVEEEDEE) are compositionally biased toward acidic residues. Residues 562–581 (SVPSEPSSPQSSTRSRSPSP) show a composition bias toward low complexity. Residues Lys593 and Lys659 each participate in a glycyl lysine isopeptide (Lys-Gly) (interchain with G-Cter in SUMO2) cross-link. One can recognise a Protein kinase domain in the interval 687–1003 (YNVYGYTGQG…INQALQHAFI (317 aa)). Residues 693 to 701 (TGQGVFSNV) and Lys717 each bind ATP. Lys717 bears the N6-acetyllysine mark. The active-site Proton acceptor is the Asp815. Residue Tyr849 is modified to Phosphotyrosine. Ser852 is subject to Phosphoserine.

The protein belongs to the protein kinase superfamily. CMGC Ser/Thr protein kinase family. Interacts with CLK1 C-terminus. Associates with the U5 snRNP and NCOR1 deacetylase complexes. Identified in the spliceosome C complex. Phosphorylated by CLK1. Autophosphorylated; phosphorylation inhibits interaction with its targets, such as PRPF6 or SMARCA4.

It localises to the nucleus. The protein localises to the chromosome. The protein resides in the centromere. Its subcellular location is the kinetochore. The catalysed reaction is L-seryl-[protein] + ATP = O-phospho-L-seryl-[protein] + ADP + H(+). It catalyses the reaction L-threonyl-[protein] + ATP = O-phospho-L-threonyl-[protein] + ADP + H(+). Its function is as follows. Serine/threonine kinase involved in spliceosomal assembly as well as mitosis and signaling regulation. Connects chromatin mediated regulation of transcription and pre-mRNA splicing. During spliceosomal assembly, interacts with and phosphorylates PRPF6 and PRPF31, components of the U4/U6-U5 tri-small nuclear ribonucleoprotein (snRNP), to facilitate the formation of the spliceosome B complex. Plays a role in regulating transcription and the spindle assembly checkpoint (SAC). Associates with U5 snRNP and NCOR1 deacetylase complexes which may allow a coordination of pre-mRNA splicing with chromatin remodeling events involved in transcriptional regulation. Associates and probably phosphorylates SMARCA4 and NCOR1. Phosphorylates SRSF1. Associates with kinetochores during mitosis and is necessary for recruitment and maintenance of the checkpoint proteins such as MAD1L1 and MAD12L1 at the kinetochores. Phosphorylates and regulates the activity of the transcription factors such as ELK1 and KLF13. Phosphorylates nuclear YAP1 and WWTR1/TAZ which induces nuclear exclusion and regulates Hippo signaling pathway, involved in tissue growth control. This chain is Serine/threonine-protein kinase PRP4 homolog (Prp4k), found in Rattus norvegicus (Rat).